The chain runs to 76 residues: Exodeoxyribonuclease 7 small subunit (76 aa).

It belongs to the XseB family. Heterooligomer composed of large and small subunits.

It localises to the cytoplasm. The enzyme catalyses Exonucleolytic cleavage in either 5'- to 3'- or 3'- to 5'-direction to yield nucleoside 5'-phosphates.. Its function is as follows. Bidirectionally degrades single-stranded DNA into large acid-insoluble oligonucleotides, which are then degraded further into small acid-soluble oligonucleotides. The sequence is that of Exodeoxyribonuclease 7 small subunit from Bacillus mycoides (strain KBAB4) (Bacillus weihenstephanensis).